The following is a 382-amino-acid chain: Galactokinase (382 aa).

Residue 34–37 (EHTD) participates in substrate binding. 124-130 (GAGLSSS) contributes to the ATP binding site. Positions 130 and 162 each coordinate Mg(2+). Asp-174 serves as the catalytic Proton acceptor. Tyr-223 provides a ligand contact to substrate.

It belongs to the GHMP kinase family. GalK subfamily.

It localises to the cytoplasm. It carries out the reaction alpha-D-galactose + ATP = alpha-D-galactose 1-phosphate + ADP + H(+). Its pathway is carbohydrate metabolism; galactose metabolism. Functionally, catalyzes the transfer of the gamma-phosphate of ATP to D-galactose to form alpha-D-galactose-1-phosphate (Gal-1-P). In Escherichia coli O9:H4 (strain HS), this protein is Galactokinase.